The chain runs to 626 residues: Chaperone protein HtpG (626 aa).

Residues 1 to 339 form an a; substrate-binding region; sequence MSQNQETRGF…SNDLPLNVSR (339 aa). The segment at 340–555 is b; it reads EILQDNKITA…NDQMTTQMAK (216 aa). A c region spans residues 556 to 626; that stretch reads LFAAAGQPVP…FIKRINKLLG (71 aa).

This sequence belongs to the heat shock protein 90 family. In terms of assembly, homodimer.

The protein localises to the cytoplasm. In terms of biological role, molecular chaperone. Has ATPase activity. The protein is Chaperone protein HtpG of Haemophilus influenzae (strain ATCC 51907 / DSM 11121 / KW20 / Rd).